A 265-amino-acid chain; its full sequence is MATPPKRICIDVPASPSGNKCKVKRISIEGNIAAGKSTFVNILKKANEEWDVVPEPIARWCNIQSCKDEFEELTTSQKSGGNLLQMMYEKPERWSFTFQSYACLSRIRAQLKALGGKLKEAENPVLFFERSVYSDRYIFASNLYEAECMNETEWTVYQDWHDWMNSQFGADLELDGIIYLRAIPEKCLNRVYTRGREEEQGIPMEYLEKLHYKHETWLHHRTLRTDFEYLQEIPILTLDVNEDFRDNKQKQESLIEKVKEFLSTL.

30-38 (GNIAAGKST) contacts ATP. Positions 55, 88, and 99 each coordinate substrate. The Proton acceptor role is filled by Glu-129. The substrate site is built by Arg-130 and Asp-135. 190-194 (RVYTR) contributes to the ATP binding site. Position 199 (Glu-199) interacts with substrate. ATP is bound at residue 242–244 (EDF).

Belongs to the DCK/DGK family. As to quaternary structure, homodimer.

The protein localises to the nucleus. The enzyme catalyses 2'-deoxycytidine + a ribonucleoside 5'-triphosphate = dCMP + a ribonucleoside 5'-diphosphate + H(+). It carries out the reaction 2'-deoxyguanosine + ATP = dGMP + ADP + H(+). The catalysed reaction is 2'-deoxyadenosine + ATP = dAMP + ADP + H(+). In terms of biological role, phosphorylates the deoxyribonucleosides deoxyadenosine, deoxycytidine and deoxyguanosine with highest activity against deoxycytidine followed by deadenosine and deoxyguanosine. Shows only very minor activity against deoxyuridine and deoxythymidine. This is Deoxycytidine kinase 1 from Xenopus laevis (African clawed frog).